The sequence spans 375 residues: MVSLYLENGLFLQAQSFGASGTQAGELVFNTSMSGYQEVISDPSYKGQFVVFSMPEIGVVGANSKDDESFFSCAGVLARHYNEFFSNSRADFSLSAYLKERGVLGVCGVDTRSLIKTLRHHGCLMMVASTIEHDKNKLEEILKNAPKISHSPLVSSVSTPKITTHQRATFDFKTLDYKPFDEKTSHKIIAVLDFGAKGNILNELQNVGLKALIYPHHTKASELIKAYEKKEISGIFLSNGPGDPLSLQQEIGEIKQLINAKIPMLGICLGHQLLSIAQGYPTYKLKFGHHGSNHPVKNLKTNAVEITAQNHNYCVPEDIEEIAIITHRNLFDNTIEGVRYKNAPIISVQHHPESSPGPKESHYIFKEFVELLKDF.

Residues 1–184 (MVSLYLENGL…LDYKPFDEKT (184 aa)) form a CPSase region. Residues Ser44, Gly240, and Gly242 each contribute to the L-glutamine site. One can recognise a Glutamine amidotransferase type-1 domain in the interval 188–375 (IIAVLDFGAK…KEFVELLKDF (188 aa)). Catalysis depends on Cys268, which acts as the Nucleophile. L-glutamine contacts are provided by Leu269, Gln272, Asn310, and Tyr313. Active-site residues include His351 and Glu353.

It belongs to the CarA family. In terms of assembly, composed of two chains; the small (or glutamine) chain promotes the hydrolysis of glutamine to ammonia, which is used by the large (or ammonia) chain to synthesize carbamoyl phosphate. Tetramer of heterodimers (alpha,beta)4.

It carries out the reaction hydrogencarbonate + L-glutamine + 2 ATP + H2O = carbamoyl phosphate + L-glutamate + 2 ADP + phosphate + 2 H(+). The catalysed reaction is L-glutamine + H2O = L-glutamate + NH4(+). It participates in amino-acid biosynthesis; L-arginine biosynthesis; carbamoyl phosphate from bicarbonate: step 1/1. It functions in the pathway pyrimidine metabolism; UMP biosynthesis via de novo pathway; (S)-dihydroorotate from bicarbonate: step 1/3. Functionally, small subunit of the glutamine-dependent carbamoyl phosphate synthetase (CPSase). CPSase catalyzes the formation of carbamoyl phosphate from the ammonia moiety of glutamine, carbonate, and phosphate donated by ATP, constituting the first step of 2 biosynthetic pathways, one leading to arginine and/or urea and the other to pyrimidine nucleotides. The small subunit (glutamine amidotransferase) binds and cleaves glutamine to supply the large subunit with the substrate ammonia. This is Carbamoyl phosphate synthase small chain from Helicobacter pylori (strain ATCC 700392 / 26695) (Campylobacter pylori).